A 103-amino-acid polypeptide reads, in one-letter code: N(4)-acetylcytidine amidohydrolase (103 aa).

Residues 6 to 94 (ITFFQRFQND…IAEIYPNQTQ (89 aa)) form the ASCH domain. The active-site Proton acceptor is lysine 21. Threonine 24 acts as the Nucleophile in catalysis. Glutamate 74 functions as the Proton donor in the catalytic mechanism.

This sequence belongs to the N(4)-acetylcytidine amidohydrolase family.

It catalyses the reaction N(4)-acetylcytidine + H2O = cytidine + acetate + H(+). It carries out the reaction N(4)-acetyl-2'-deoxycytidine + H2O = 2'-deoxycytidine + acetate + H(+). The catalysed reaction is N(4)-acetylcytosine + H2O = cytosine + acetate + H(+). Its function is as follows. Catalyzes the hydrolysis of N(4)-acetylcytidine (ac4C). The chain is N(4)-acetylcytidine amidohydrolase (yqfB) from Salmonella typhi.